The chain runs to 121 residues: MDYRFGRQYRLLKTDDFSSVFAFRNRRSRDLLQVSRSNGNGLGHPRIGLVVGKKTAKRANERNYMKRVIRDWFRLNKNRLPPQDFVVRVHRKFDRATAKQARAELAQLMFGNPATGCRKQA.

Belongs to the RnpA family. As to quaternary structure, consists of a catalytic RNA component (M1 or rnpB) and a protein subunit.

The catalysed reaction is Endonucleolytic cleavage of RNA, removing 5'-extranucleotides from tRNA precursor.. Functionally, RNaseP catalyzes the removal of the 5'-leader sequence from pre-tRNA to produce the mature 5'-terminus. It can also cleave other RNA substrates such as 4.5S RNA. The protein component plays an auxiliary but essential role in vivo by binding to the 5'-leader sequence and broadening the substrate specificity of the ribozyme. The chain is Ribonuclease P protein component from Neisseria meningitidis serogroup B (strain ATCC BAA-335 / MC58).